The chain runs to 299 residues: GTP cyclohydrolase FolE2 (299 aa).

It belongs to the GTP cyclohydrolase IV family.

The catalysed reaction is GTP + H2O = 7,8-dihydroneopterin 3'-triphosphate + formate + H(+). It functions in the pathway cofactor biosynthesis; 7,8-dihydroneopterin triphosphate biosynthesis; 7,8-dihydroneopterin triphosphate from GTP: step 1/1. Converts GTP to 7,8-dihydroneopterin triphosphate. The protein is GTP cyclohydrolase FolE2 of Klebsiella pneumoniae.